The chain runs to 314 residues: MAATASPGAGRMDGKPRTSPKSVKFLFGGLAGMGATVFVQPLDLVKNRMQLSGEGAKTREYKTSFHALTSILKTEGLKGIYTGLSAGLLRQATYTTTRLGIYTVLFERLTGADGTPPGFLLKALIGMTAGATGAFVGTPAEVALIRMTADGRLPADQRRGYKNVFNALVRIAREEGVPTLWRGCIPTMARAVVVNAAQLASYSQSKQFLLDSGYFSDNILCHFCASMISGLVTTAASMPVDIVKTRIQNMRMIDGKPEYKNGLDVLLKVVRYEGFFSLWKGFTPYYARLGPHTVLTFIFLEQMNKAYKRLFLSG.

N-acetylalanine is present on alanine 2. Serine 6 is modified (phosphoserine). Solcar repeat units lie at residues 23-108, 117-208, and 217-306; these read VKFL…LFER, PGFL…SKQF, and DNIL…MNKA. Residues 24 to 42 traverse the membrane as a helical segment; it reads KFLFGGLAGMGATVFVQPL. Lysine 57 bears the N6-succinyllysine mark. Lysine 73 is modified (N6-acetyllysine). Residues 83–101 traverse the membrane as a helical segment; sequence GLSAGLLRQATYTTTRLGI. Tyrosine 102 is modified (phosphotyrosine). The next 3 membrane-spanning stretches (helical) occupy residues 119-140, 183-202, and 222-240; these read FLLK…GTPA, GCIP…LASY, and HFCA…SMPV. Lysine 256 is subject to N6-acetyllysine. Residues 281 to 300 form a helical membrane-spanning segment; that stretch reads GFTPYYARLGPHTVLTFIFL.

Belongs to the mitochondrial carrier (TC 2.A.29) family. In terms of assembly, interacts with SMIM26.

The protein resides in the mitochondrion inner membrane. It catalyses the reaction (S)-malate(in) + 2-oxoglutarate(out) = (S)-malate(out) + 2-oxoglutarate(in). The enzyme catalyses malonate(in) + 2-oxoglutarate(out) = malonate(out) + 2-oxoglutarate(in). The catalysed reaction is succinate(in) + 2-oxoglutarate(out) = succinate(out) + 2-oxoglutarate(in). It carries out the reaction maleate(in) + 2-oxoglutarate(out) = maleate(out) + 2-oxoglutarate(in). It catalyses the reaction oxaloacetate(in) + 2-oxoglutarate(out) = oxaloacetate(out) + 2-oxoglutarate(in). Catalyzes the transport of 2-oxoglutarate (alpha-oxoglutarate) across the inner mitochondrial membrane in an electroneutral exchange for malate. Can also exchange 2-oxoglutarate for other dicarboxylic acids such as malonate, succinate, maleate and oxaloacetate, although with lower affinity. Contributes to several metabolic processes, including the malate-aspartate shuttle, the oxoglutarate/isocitrate shuttle, in gluconeogenesis from lactate, and in nitrogen metabolism. Maintains mitochondrial fusion and fission events, and the organization and morphology of cristae. Involved in the regulation of apoptosis. Helps protect from cytotoxic-induced apoptosis by modulating glutathione levels in mitochondria. The sequence is that of Mitochondrial 2-oxoglutarate/malate carrier protein (Slc25a11) from Mus musculus (Mouse).